Consider the following 20-residue polypeptide: L-amino-acid oxidase L2 (20 aa).

Belongs to the flavin monoamine oxidase family. FIG1 subfamily. In terms of assembly, monomer. This is in contrast with most of its orthologs, that are non-covalently linked homodimers. Requires FAD as cofactor. In terms of processing, N-glycosylated. As to expression, expressed by the venom gland.

It is found in the secreted. It catalyses the reaction an L-alpha-amino acid + O2 + H2O = a 2-oxocarboxylate + H2O2 + NH4(+). It carries out the reaction L-leucine + O2 + H2O = 4-methyl-2-oxopentanoate + H2O2 + NH4(+). The catalysed reaction is L-phenylalanine + O2 + H2O = 3-phenylpyruvate + H2O2 + NH4(+). The enzyme catalyses L-tryptophan + O2 + H2O = indole-3-pyruvate + H2O2 + NH4(+). It catalyses the reaction L-methionine + O2 + H2O = 4-methylsulfanyl-2-oxobutanoate + H2O2 + NH4(+). It carries out the reaction L-isoleucine + O2 + H2O = (S)-3-methyl-2-oxopentanoate + H2O2 + NH4(+). The catalysed reaction is L-tyrosine + O2 + H2O = 3-(4-hydroxyphenyl)pyruvate + H2O2 + NH4(+). Catalyzes an oxidative deamination of predominantly hydrophobic and aromatic L-amino acids, thus producing hydrogen peroxide that may contribute to the diverse toxic effects of this enzyme. Is active on L-Ile, L-Leu, L-Met, L-Phe, L-Trp, and L-Tyr. Exhibits diverse biological activities, such as hemorrhage, hemolysis, edema, apoptosis of vascular endothelial cells or tumor cell lines, antibacterial and antiparasitic activities, as well as regulation of platelet aggregation. Its effect on platelets is controversial, since it either induces aggregation or inhibits agonist-induced aggregation. These different effects are probably due to different experimental conditions. The protein is L-amino-acid oxidase L2 of Daboia russelii (Russel's viper).